The sequence spans 154 residues: MutT-like protein (154 aa).

The region spanning 15–136 (PLHSVSVAGV…YAIRLLDALD (122 aa)) is the Nudix hydrolase domain. Mg(2+)-binding residues include glycine 48, glutamate 63, glutamate 66, and glutamate 67. Residues 48–69 (GVLELDETPETGVAREVWEETG) carry the Nudix box motif.

Belongs to the Nudix hydrolase family.

The chain is MutT-like protein from Streptomyces ambofaciens.